Consider the following 117-residue polypeptide: Translation initiation factor 1A (117 aa).

The S1-like domain occupies 17–92; the sequence is IRVPLPDRSK…ERGDIVYRYT (76 aa).

Belongs to the eIF-1A family.

Functionally, seems to be required for maximal rate of protein biosynthesis. Enhances ribosome dissociation into subunits and stabilizes the binding of the initiator Met-tRNA(I) to 40 S ribosomal subunits. The protein is Translation initiation factor 1A of Thermococcus kodakarensis (strain ATCC BAA-918 / JCM 12380 / KOD1) (Pyrococcus kodakaraensis (strain KOD1)).